The primary structure comprises 364 residues: MLIFPLINDTSRKIIHIDMDAFFAAVEERDNPALKGKPVVIGKDPRETGGRGVVSTCNYEARKYGIHSAMSSKEAYERCPKAIFISGNYEKYRTVGDQIRRIFKRYTDVVEPMSIDEAYLDVTDNKLGIKSAVKIAKLIQHDIWKEVGLTCSAGVSYNKFLAKLASDFEKPHGLTLVLKEDALCFLAKLPIEKFHGVGKKSVKKLHDMGIYTGQDLLAVPEMTLIDHFGRFGFDLYRKARGISNSPVKSDRIRKSIGSERTYAKLLYQETDIKAEISKNVKRVAALLQDHKKLGKTIVLKVRYADFTTLTKRVTLPELTRNAAQIEQVAGDIFDSLSENPAGIRLLGVTMTNLEDKVADISLDL.

Positions 14–198 constitute a UmuC domain; sequence IIHIDMDAFF…LPIEKFHGVG (185 aa). D18 and D116 together coordinate Mg(2+). Residue E117 is part of the active site.

The protein belongs to the DNA polymerase type-Y family. In terms of assembly, monomer. The cofactor is Mg(2+).

The protein localises to the cytoplasm. It carries out the reaction DNA(n) + a 2'-deoxyribonucleoside 5'-triphosphate = DNA(n+1) + diphosphate. Poorly processive, error-prone DNA polymerase involved in untargeted mutagenesis. Copies undamaged DNA at stalled replication forks, which arise in vivo from mismatched or misaligned primer ends. These misaligned primers can be extended by PolIV. Exhibits no 3'-5' exonuclease (proofreading) activity. May be involved in translesional synthesis, in conjunction with the beta clamp from PolIII. This Streptococcus pyogenes serotype M1 protein is DNA polymerase IV.